A 211-amino-acid chain; its full sequence is ATP-dependent Clp protease proteolytic subunit 1 (211 aa).

The active-site Nucleophile is Ser-107. His-132 is a catalytic residue.

It belongs to the peptidase S14 family. Fourteen ClpP subunits assemble into 2 heptameric rings which stack back to back to give a disk-like structure with a central cavity, resembling the structure of eukaryotic proteasomes.

The protein localises to the cytoplasm. The catalysed reaction is Hydrolysis of proteins to small peptides in the presence of ATP and magnesium. alpha-casein is the usual test substrate. In the absence of ATP, only oligopeptides shorter than five residues are hydrolyzed (such as succinyl-Leu-Tyr-|-NHMec, and Leu-Tyr-Leu-|-Tyr-Trp, in which cleavage of the -Tyr-|-Leu- and -Tyr-|-Trp bonds also occurs).. Its function is as follows. Cleaves peptides in various proteins in a process that requires ATP hydrolysis. Has a chymotrypsin-like activity. Plays a major role in the degradation of misfolded proteins. The polypeptide is ATP-dependent Clp protease proteolytic subunit 1 (Mycolicibacterium paratuberculosis (strain ATCC BAA-968 / K-10) (Mycobacterium paratuberculosis)).